The sequence spans 142 residues: Small heat shock protein IbpB (142 aa).

The sHSP domain maps to 26 to 137; that stretch reads SGESQSFPPY…APQRIAINER (112 aa).

It belongs to the small heat shock protein (HSP20) family. As to quaternary structure, homodimer. Forms homomultimers of about 100-150 subunits at optimal growth temperatures. Conformation changes to oligomers at high temperatures or high ionic concentrations. The decrease in size of the multimers is accompanied by an increase in chaperone activity.

The protein localises to the cytoplasm. Its function is as follows. Associates with aggregated proteins, together with IbpA, to stabilize and protect them from irreversible denaturation and extensive proteolysis during heat shock and oxidative stress. Aggregated proteins bound to the IbpAB complex are more efficiently refolded and reactivated by the ATP-dependent chaperone systems ClpB and DnaK/DnaJ/GrpE. Its activity is ATP-independent. The chain is Small heat shock protein IbpB from Salmonella newport (strain SL254).